We begin with the raw amino-acid sequence, 297 residues long: UDP-N-acetylenolpyruvoylglucosamine reductase (297 aa).

The FAD-binding PCMH-type domain occupies Ile27–Gly192. Arg170 is an active-site residue. The active-site Proton donor is the Ser220. Residue Glu290 is part of the active site.

The protein belongs to the MurB family. The cofactor is FAD.

The protein localises to the cytoplasm. The catalysed reaction is UDP-N-acetyl-alpha-D-muramate + NADP(+) = UDP-N-acetyl-3-O-(1-carboxyvinyl)-alpha-D-glucosamine + NADPH + H(+). It participates in cell wall biogenesis; peptidoglycan biosynthesis. Cell wall formation. The polypeptide is UDP-N-acetylenolpyruvoylglucosamine reductase (Rubrobacter xylanophilus (strain DSM 9941 / JCM 11954 / NBRC 16129 / PRD-1)).